The sequence spans 324 residues: Glycerol-3-phosphate dehydrogenase [NAD(P)+] (324 aa).

NADPH-binding residues include Ser10, Phe11, Arg31, and Lys106. Sn-glycerol 3-phosphate contacts are provided by Lys106, Gly134, and Ser136. Residue Ala138 participates in NADPH binding. Sn-glycerol 3-phosphate is bound by residues Lys189, Asp244, Ser254, Arg255, and Asn256. Residue Lys189 is the Proton acceptor of the active site. An NADPH-binding site is contributed by Arg255. NADPH is bound by residues Ile279 and Glu281.

It belongs to the NAD-dependent glycerol-3-phosphate dehydrogenase family.

The protein localises to the cytoplasm. It catalyses the reaction sn-glycerol 3-phosphate + NAD(+) = dihydroxyacetone phosphate + NADH + H(+). The catalysed reaction is sn-glycerol 3-phosphate + NADP(+) = dihydroxyacetone phosphate + NADPH + H(+). It participates in membrane lipid metabolism; glycerophospholipid metabolism. Its function is as follows. Catalyzes the reduction of the glycolytic intermediate dihydroxyacetone phosphate (DHAP) to sn-glycerol 3-phosphate (G3P), the key precursor for phospholipid synthesis. The polypeptide is Glycerol-3-phosphate dehydrogenase [NAD(P)+] (Ehrlichia canis (strain Jake)).